A 455-amino-acid chain; its full sequence is Probable ATP-dependent RNA helicase DDX47 (455 aa).

Residues 1-10 (MAAPEEHDSP) show a composition bias toward basic and acidic residues. The disordered stretch occupies residues 1–20 (MAAPEEHDSPTEASQPIVEE). N-acetylalanine is present on A2. S9 carries the post-translational modification Phosphoserine. Residues 24 to 52 (KTFKDLGVTDVLCEACDQLGWTKPTKIQI) carry the Q motif motif. The Helicase ATP-binding domain occupies 55–226 (IPLALQGRDI…RAALKNPVKC (172 aa)). Residue 68–75 (AETGSGKT) participates in ATP binding. A Phosphothreonine modification is found at T149. The DEAD box motif lies at 174–177 (DEAD). The region spanning 237–397 (KLQQYYIFIP…GFPTQDDEVM (161 aa)) is the Helicase C-terminal domain. A compositionally biased stretch (basic and acidic residues) spans 413-428 (ELREHGEKKKRSREDA). The segment at 413-455 (ELREHGEKKKRSREDAGDNDDTEGAIGVRNKVAGGKMKKRKGR) is disordered. S424 carries the post-translational modification Phosphoserine.

The protein belongs to the DEAD box helicase family. DDX47/RRP3 subfamily. In terms of assembly, interacts with AGO1 and AGO2. Interacts with GABARAP. Interacts with NOL8; the interaction is RNA-dependent. Expressed in skin, lung and breast. Also expressed in the brain.

It localises to the nucleus. The protein localises to the nucleolus. It carries out the reaction ATP + H2O = ADP + phosphate + H(+). In terms of biological role, required for efficient ribosome biogenesis. May have a role in mRNA splicing. Involved in apoptosis. This is Probable ATP-dependent RNA helicase DDX47 (DDX47) from Homo sapiens (Human).